A 390-amino-acid polypeptide reads, in one-letter code: Phosphopentomutase (390 aa).

Mn(2+) contacts are provided by aspartate 10, aspartate 282, histidine 287, aspartate 323, histidine 324, and histidine 335.

It belongs to the phosphopentomutase family. Mn(2+) is required as a cofactor.

It is found in the cytoplasm. It catalyses the reaction 2-deoxy-alpha-D-ribose 1-phosphate = 2-deoxy-D-ribose 5-phosphate. It carries out the reaction alpha-D-ribose 1-phosphate = D-ribose 5-phosphate. The protein operates within carbohydrate degradation; 2-deoxy-D-ribose 1-phosphate degradation; D-glyceraldehyde 3-phosphate and acetaldehyde from 2-deoxy-alpha-D-ribose 1-phosphate: step 1/2. Its function is as follows. Isomerase that catalyzes the conversion of deoxy-ribose 1-phosphate (dRib-1-P) and ribose 1-phosphate (Rib-1-P) to deoxy-ribose 5-phosphate (dRib-5-P) and ribose 5-phosphate (Rib-5-P), respectively. The chain is Phosphopentomutase from Lachnoclostridium phytofermentans (strain ATCC 700394 / DSM 18823 / ISDg) (Clostridium phytofermentans).